The following is an 87-amino-acid chain: Olfactory receptor-like protein HbT2 (87 aa).

Topologically, residues Lys-1–Thr-8 are cytoplasmic. A helical membrane pass occupies residues Trp-9 to Cys-29. At Gly-30–Glu-55 the chain is on the extracellular side. A helical transmembrane segment spans residues Gly-56–Ser-76. Residues Ser-77–Asn-87 lie on the Cytoplasmic side of the membrane.

It belongs to the G-protein coupled receptor 1 family.

The protein localises to the cell membrane. Its function is as follows. Odorant receptor. This Apis mellifera ligustica (Common honeybee) protein is Olfactory receptor-like protein HbT2.